Here is a 165-residue protein sequence, read N- to C-terminus: Anaerobic nitrite reductase GLB1 (165 aa).

The Globin domain maps to 12 to 162 (VFGEEQEALV…LVAAIKREMK (151 aa)). Positions 45-49 (EIAPS) match the Homodimerization motif. 6 residues coordinate heme b: Ser-55, Lys-69, His-73, Arg-103, Thr-107, and His-108. The Homodimerization signature appears at 115–127 (DGHFEVTGFALLE).

The protein belongs to the plant globin family. Homodimer. Requires heme b as cofactor. In terms of tissue distribution, in vegetative but not in embryonic organs.

It localises to the cytoplasm. Its subcellular location is the nucleus. It catalyses the reaction Fe(III)-heme b-[protein] + nitric oxide + H2O = Fe(II)-heme b-[protein] + nitrite + 2 H(+). In terms of biological role, phytoglobin that reduces nitrite to nitric oxide (NO) under anoxic conditions (e.g. during flooding or in waterlogged soil). May not function as an oxygen storage or transport protein. Has an unusually high affinity for O(2) through an hexacoordinate heme iron because of a very low dissociation constant. This is Anaerobic nitrite reductase GLB1 (HB) from Zea mays subsp. parviglumis (Balsas teosinte).